The primary structure comprises 399 residues: MSDQLILVLNCGSSSLKGAVIDRKSGSVVLSCLGERLTTPEAVITFSKDGNKRQVPLSGRNCHAGAVGMLLNELEKHELHDRIQAVGHRIAHGGEKYSESVLIDQAVMDELNACIPLAPLHNPANISGILAAQEHFPGLPNVGVMDTSFHQTMPERAYTYAVPRELRKKYAFRRYGFHGTSMRYVAPEAACILGKPLEDIRMIIAHLGNGASITAIKNGKSVDTSMGFTPIEGLVMGTRCGDIDPGVYSYLTSHAGLDVAQVDEMLNKKSGLLGISELSNDCRTLEIAADEGHEGARLALEVMTYRLAKYIASMAVGCGGVDALVFTGGIGENSRNIRAKTVSYLDFLGLHIDTKANMEKRYGNSGIISPTDSSPAVLVVPTNEELMIACDTAELVGIL.

Asparagine 10 contacts Mg(2+). Lysine 17 contacts ATP. Arginine 89 provides a ligand contact to substrate. Residue aspartate 146 is the Proton donor/acceptor of the active site. ATP-binding positions include 206 to 210 (HLGNG), 281 to 283 (DCR), and 329 to 333 (GIGEN). Glutamate 384 serves as a coordination point for Mg(2+).

It belongs to the acetokinase family. Homodimer. It depends on Mg(2+) as a cofactor. Mn(2+) is required as a cofactor.

Its subcellular location is the cytoplasm. It catalyses the reaction acetate + ATP = acetyl phosphate + ADP. It functions in the pathway metabolic intermediate biosynthesis; acetyl-CoA biosynthesis; acetyl-CoA from acetate: step 1/2. Catalyzes the formation of acetyl phosphate from acetate and ATP. Can also catalyze the reverse reaction. In Neisseria meningitidis serogroup A / serotype 4A (strain DSM 15465 / Z2491), this protein is Acetate kinase 2.